The primary structure comprises 238 residues: Ribosomal RNA small subunit methyltransferase G (238 aa).

S-adenosyl-L-methionine-binding positions include Gly-77, Phe-82, 128 to 129, and Arg-147; that span reads AE.

It belongs to the methyltransferase superfamily. RNA methyltransferase RsmG family.

Its subcellular location is the cytoplasm. Its function is as follows. Specifically methylates the N7 position of guanine in position 535 of 16S rRNA. This chain is Ribosomal RNA small subunit methyltransferase G, found in Geobacillus kaustophilus (strain HTA426).